The primary structure comprises 159 residues: Putative 4-hydroxy-4-methyl-2-oxoglutarate aldolase (159 aa).

Substrate is bound by residues 78 to 81 and R100; that span reads GDVI. A divalent metal cation is bound at residue D101.

Belongs to the class II aldolase/RraA-like family. As to quaternary structure, homotrimer. The cofactor is a divalent metal cation.

It carries out the reaction 4-hydroxy-4-methyl-2-oxoglutarate = 2 pyruvate. The catalysed reaction is oxaloacetate + H(+) = pyruvate + CO2. In terms of biological role, catalyzes the aldol cleavage of 4-hydroxy-4-methyl-2-oxoglutarate (HMG) into 2 molecules of pyruvate. Also contains a secondary oxaloacetate (OAA) decarboxylase activity due to the common pyruvate enolate transition state formed following C-C bond cleavage in the retro-aldol and decarboxylation reactions. This Mycobacterium sp. (strain KMS) protein is Putative 4-hydroxy-4-methyl-2-oxoglutarate aldolase.